An 867-amino-acid polypeptide reads, in one-letter code: Elongation factor 2 (867 aa).

Residues 17–368 form the tr-type G domain; that stretch reads HNIRNLSVVA…MIVLHLPSPV (352 aa). 26 to 33 contacts GTP; it reads AHVDHGKS. Phosphothreonine is present on residues Thr-57 and Thr-59. Residues 176–179 and 231–233 each bind GTP; these read NKLD and SGL. His-723 is modified (diphthamide).

Belongs to the TRAFAC class translation factor GTPase superfamily. Classic translation factor GTPase family. EF-G/EF-2 subfamily. Phosphorylation by EF-2 kinase completely inactivates EF-2.

It localises to the cytoplasm. It catalyses the reaction GTP + H2O = GDP + phosphate + H(+). Functionally, catalyzes the GTP-dependent ribosomal translocation step during translation elongation. During this step, the ribosome changes from the pre-translocational (PRE) to the post-translocational (POST) state as the newly formed A-site-bound peptidyl-tRNA and P-site-bound deacylated tRNA move to the P and E sites, respectively. Catalyzes the coordinated movement of the two tRNA molecules, the mRNA and conformational changes in the ribosome. This is Elongation factor 2 from Blastocystis hominis.